A 353-amino-acid polypeptide reads, in one-letter code: uncharacterized protein (353 aa).

Belongs to the mimivirus L17x/L18x family.

This is an uncharacterized protein from Acanthamoeba polyphaga (Amoeba).